The chain runs to 167 residues: MQEFYSFSPIDENGNPFPFNSLRNKVVLIVNVASHCAFTPQYKELEYLYEKYKSHGLVIVAFPCGQFGNQEFEKDKEINKFCQDKYGVTFPILHKIRCNGQKQDPVYKFLKNSVSGKSGIKMIKWNFEKFVVDRNGKVVKRFSCMTRPLELCPIIEELLNQPPEEQI.

C36 acts as the Cysteine sulfenic acid (-SOH) intermediate in catalysis. The cysteines at positions 36 and 82 are disulfide-linked.

This sequence belongs to the glutathione peroxidase family. In terms of assembly, monomer.

It localises to the peroxisome matrix. Its subcellular location is the mitochondrion outer membrane. It carries out the reaction 2 glutathione + H2O2 = glutathione disulfide + 2 H2O. It catalyses the reaction a hydroperoxide + [thioredoxin]-dithiol = an alcohol + [thioredoxin]-disulfide + H2O. In terms of biological role, glutathione peroxidase-like protein that protects cells from phospholipid hydroperoxides and nonphospholipid peroxides during oxidative stress. Has peroxidase activity using thioredoxin or glutathione as a reducing power. Involved in peroxisome formation. This chain is Glutathione peroxidase-like peroxiredoxin 1, found in Saccharomyces cerevisiae (strain ATCC 204508 / S288c) (Baker's yeast).